The primary structure comprises 277 residues: Uridine-cytidine kinase 1 (277 aa).

The segment at 1–30 (MASAGGEDCESPAPEADRPHQRPFLIGVSG) is disordered. Residue 30–38 (GGTASGKST) coordinates ATP. Aspartate 65 is an active-site residue. Aspartate 87, tyrosine 115, histidine 120, arginine 169, arginine 178, and glutamine 186 together coordinate substrate. Residue aspartate 215 participates in ATP binding. Positions 247–277 (SYKRTFSEPGDHPGMLTSGKRSHLESSSRPH) are disordered. Position 251 is a phosphothreonine (threonine 251). Phosphoserine is present on serine 253. Over residues 268-277 (SHLESSSRPH) the composition is skewed to basic and acidic residues.

It belongs to the uridine kinase family. As to expression, ubiquitous.

It carries out the reaction uridine + ATP = UMP + ADP + H(+). It catalyses the reaction cytidine + ATP = CMP + ADP + H(+). Its pathway is pyrimidine metabolism; CTP biosynthesis via salvage pathway; CTP from cytidine: step 1/3. It participates in pyrimidine metabolism; UMP biosynthesis via salvage pathway; UMP from uridine: step 1/1. In terms of biological role, phosphorylates uridine and cytidine to uridine monophosphate and cytidine monophosphate. Does not phosphorylate deoxyribonucleosides or purine ribonucleosides. Can use ATP or GTP as a phosphate donor. Can also phosphorylate cytidine and uridine nucleoside analogs such as 6-azauridine, 5-fluorouridine, 4-thiouridine, 5-bromouridine, N(4)-acetylcytidine, N(4)-benzoylcytidine, 5-fluorocytidine, 2-thiocytidine, 5-methylcytidine, and N(4)-anisoylcytidine. This is Uridine-cytidine kinase 1 (UCK1) from Homo sapiens (Human).